A 232-amino-acid chain; its full sequence is Large ribosomal subunit protein uL1 (232 aa).

This sequence belongs to the universal ribosomal protein uL1 family. Part of the 50S ribosomal subunit.

Functionally, binds directly to 23S rRNA. The L1 stalk is quite mobile in the ribosome, and is involved in E site tRNA release. In terms of biological role, protein L1 is also a translational repressor protein, it controls the translation of the L11 operon by binding to its mRNA. The sequence is that of Large ribosomal subunit protein uL1 from Bacillus cereus (strain ATCC 14579 / DSM 31 / CCUG 7414 / JCM 2152 / NBRC 15305 / NCIMB 9373 / NCTC 2599 / NRRL B-3711).